The sequence spans 103 residues: Co-chaperonin GroES (103 aa).

The protein belongs to the GroES chaperonin family. In terms of assembly, heptamer of 7 subunits arranged in a ring. Interacts with the chaperonin GroEL.

It localises to the cytoplasm. Its function is as follows. Together with the chaperonin GroEL, plays an essential role in assisting protein folding. The GroEL-GroES system forms a nano-cage that allows encapsulation of the non-native substrate proteins and provides a physical environment optimized to promote and accelerate protein folding. GroES binds to the apical surface of the GroEL ring, thereby capping the opening of the GroEL channel. This is Co-chaperonin GroES from Synechococcus elongatus (strain ATCC 33912 / PCC 7942 / FACHB-805) (Anacystis nidulans R2).